We begin with the raw amino-acid sequence, 129 residues long: Small ribosomal subunit protein uS11 (129 aa).

Belongs to the universal ribosomal protein uS11 family. As to quaternary structure, part of the 30S ribosomal subunit. Interacts with proteins S7 and S18. Binds to IF-3.

In terms of biological role, located on the platform of the 30S subunit, it bridges several disparate RNA helices of the 16S rRNA. Forms part of the Shine-Dalgarno cleft in the 70S ribosome. The sequence is that of Small ribosomal subunit protein uS11 from Parvibaculum lavamentivorans (strain DS-1 / DSM 13023 / NCIMB 13966).